The sequence spans 2193 residues: Genome polyprotein (2193 aa).

The disordered stretch occupies residues M1–S23. A lipid anchor (N-myristoyl glycine; by host) is attached at G2. Residues G2–Q1503 lie on the Cytoplasmic side of the membrane. The interval G566–L588 is amphipathic alpha-helix. Residues H883 and D901 each act as for protease 2A activity in the active site. Zn(2+) is bound by residues C918 and C920. The active-site For protease 2A activity is C972. Zn(2+) is bound by residues C978 and H980. The segment at S1112 to L1184 is membrane-binding. Positions S1112–T1250 are oligomerization. An RNA-binding region spans residues S1133 to S1137. Positions E1216–A1374 constitute an SF3 helicase domain. An ATP-binding site is contributed by G1240–S1247. Zn(2+) contacts are provided by C1381, C1392, and C1397. The C4-type; degenerate zinc finger occupies C1381–C1397. The tract at residues E1424–I1431 is RNA-binding. An oligomerization region spans residues I1435–Q1440. An intramembrane segment occupies S1504–Y1519. At K1520–F2193 the chain is on the cytoplasmic side. Y1529 carries the O-(5'-phospho-RNA)-tyrosine modification. Positions G1549–F1727 constitute a Peptidase C3 domain. Active-site for protease 3C activity residues include H1588, E1619, and C1695. A RdRp catalytic domain is found at G1958–E2074. Residues D1964 and D2060 each contribute to the Mg(2+) site.

It belongs to the picornaviruses polyprotein family. In terms of assembly, interacts with capsid protein VP1 and capsid protein VP3 to form heterotrimeric protomers. Interacts with capsid protein VP0, and capsid protein VP3 to form heterotrimeric protomers. Five protomers subsequently associate to form pentamers which serve as building blocks for the capsid. Interacts with capsid protein VP2, capsid protein VP3 and capsid protein VP4 following cleavage of capsid protein VP0. As to quaternary structure, interacts with capsid protein VP1 and capsid protein VP3 in the mature capsid. In terms of assembly, interacts with capsid protein VP0 and capsid protein VP1 to form heterotrimeric protomers. Five protomers subsequently associate to form pentamers which serve as building blocks for the capsid. Interacts with capsid protein VP4 in the mature capsid. Interacts with protein 2C; this interaction may be important for virion morphogenesis. Interacts with capsid protein VP1 and capsid protein VP3. As to quaternary structure, homodimer. In terms of assembly, homohexamer; forms a hexameric ring structure with 6-fold symmetry characteristic of AAA+ ATPases. Interacts (via N-terminus) with host RTN3 (via reticulon domain); this interaction is important for viral replication. Interacts with capsid protein VP3; this interaction may be important for virion morphogenesis. Interacts with protein 3CD. As to quaternary structure, homodimer. Interacts with host GBF1. Interacts (via GOLD domain) with host ACBD3 (via GOLD domain); this interaction allows the formation of a viral protein 3A/ACBD3 heterotetramer with a 2:2 stoichiometry, which will stimulate the recruitment of host PI4KB in order to synthesize PI4P at the viral RNA replication sites. In terms of assembly, interacts with RNA-directed RNA polymerase. Interacts with host IFIH1/MDA5; this interaction inhibits host IFIH1. As to quaternary structure, protein 3CD: Interacts with protein 3AB and with RNA-directed RNA polymerase. In terms of assembly, interacts with Viral protein genome-linked and with protein 3CD. Mg(2+) is required as a cofactor. Specific enzymatic cleavages in vivo by the viral proteases yield processing intermediates and the mature proteins. Post-translationally, myristoylation is required for the formation of pentamers during virus assembly. Further assembly of 12 pentamers and a molecule of genomic RNA generates the provirion. In terms of processing, during virion maturation, immature virions are rendered infectious following cleavage of VP0 into VP4 and VP2. This maturation seems to be an autocatalytic event triggered by the presence of RNA in the capsid and it is followed by a conformational change infectious virion. Myristoylation is required during RNA encapsidation and formation of the mature virus particle. Post-translationally, VPg is uridylylated by the polymerase into VPg-pUpU. This acts as a nucleotide-peptide primer for the genomic RNA replication.

The protein resides in the virion. It is found in the host cytoplasm. The protein localises to the host cytoplasmic vesicle membrane. Its subcellular location is the host nucleus. It carries out the reaction a ribonucleoside 5'-triphosphate + H2O = a ribonucleoside 5'-diphosphate + phosphate + H(+). It catalyses the reaction Selective cleavage of Tyr-|-Gly bond in the picornavirus polyprotein.. The catalysed reaction is RNA(n) + a ribonucleoside 5'-triphosphate = RNA(n+1) + diphosphate. The enzyme catalyses Selective cleavage of Gln-|-Gly bond in the poliovirus polyprotein. In other picornavirus reactions Glu may be substituted for Gln, and Ser or Thr for Gly.. Replication or transcription is subject to high level of random mutations by the nucleotide analog ribavirin. In terms of biological role, forms an icosahedral capsid of pseudo T=3 symmetry with capsid proteins VP2 and VP3. The capsid is 300 Angstroms in diameter, composed of 60 copies of each capsid protein and enclosing the viral positive strand RNA genome. Capsid protein VP1 mainly forms the vertices of the capsid. Capsid protein VP1 interacts with host cell receptor to provide virion attachment to target host cells. This attachment induces virion internalization. After binding to its receptor, the capsid undergoes conformational changes. Capsid protein VP1 N-terminus (that contains an amphipathic alpha-helix) and capsid protein VP4 are externalized. Together, they shape a pore in the host membrane through which viral genome is translocated to host cell cytoplasm. Forms an icosahedral capsid of pseudo T=3 symmetry with capsid proteins VP2 and VP3. The capsid is 300 Angstroms in diameter, composed of 60 copies of each capsid protein and enclosing the viral positive strand RNA genome. Functionally, lies on the inner surface of the capsid shell. After binding to the host receptor, the capsid undergoes conformational changes. Capsid protein VP4 is released, Capsid protein VP1 N-terminus is externalized, and together, they shape a pore in the host membrane through which the viral genome is translocated into the host cell cytoplasm. Its function is as follows. Component of immature procapsids, which is cleaved into capsid proteins VP4 and VP2 after maturation. Allows the capsid to remain inactive before the maturation step. In terms of biological role, cysteine protease that cleaves viral polyprotein and specific host proteins. It is responsible for the autocatalytic cleavage between the P1 and P2 regions, which is the first cleavage occurring in the polyprotein. Also cleaves the host translation initiation factor EIF4G1, in order to shut down the capped cellular mRNA translation. Inhibits the host nucleus-cytoplasm protein and RNA trafficking by cleaving host members of the nuclear pores. Counteracts stress granule formation probably by antagonizing its assembly or promoting its dissassembly. Cleaves and inhibits host IFIH1/MDA5, thereby inhibiting the type-I IFN production and the establishment of the antiviral state. Cleaves and inhibits host MAVS, thereby inhibiting the type-I IFN production and the establishment of the antiviral state. Plays an essential role in the virus replication cycle by acting as a viroporin. Creates a pore in the host endoplasmic reticulum and as a consequence releases Ca2+ in the cytoplasm of infected cell. In turn, high levels of cytoplasmic calcium may trigger membrane trafficking and transport of viral ER-associated proteins to viroplasms, sites of viral genome replication. Functionally, induces and associates with structural rearrangements of intracellular membranes. Displays RNA-binding, nucleotide binding and NTPase activities. May play a role in virion morphogenesis and viral RNA encapsidation by interacting with the capsid protein VP3. Its function is as follows. Localizes the viral replication complex to the surface of membranous vesicles. Together with protein 3CD binds the Cis-Active RNA Element (CRE) which is involved in RNA synthesis initiation. Acts as a cofactor to stimulate the activity of 3D polymerase, maybe through a nucleid acid chaperone activity. In terms of biological role, localizes the viral replication complex to the surface of membranous vesicles. It inhibits host cell endoplasmic reticulum-to-Golgi apparatus transport and causes the disassembly of the Golgi complex, possibly through GBF1 interaction. This would result in depletion of MHC, trail receptors and IFN receptors at the host cell surface. Plays an essential role in viral RNA replication by recruiting ACBD3 and PI4KB at the viral replication sites, thereby allowing the formation of the rearranged membranous structures where viral replication takes place. Acts as a primer for viral RNA replication and remains covalently bound to viral genomic RNA. VPg is uridylylated prior to priming replication into VPg-pUpU. The oriI viral genomic sequence may act as a template for this. The VPg-pUpU is then used as primer on the genomic RNA poly(A) by the RNA-dependent RNA polymerase to replicate the viral genome. During genome replication, the VPg-RNA linkage is removed by the host TDP2, thereby accelerating replication. During the late stage of the replication cycle, host TDP2 is excluded from sites of viral RNA synthesis and encapsidation, allowing for the generation of progeny virions. Functionally, involved in the viral replication complex and viral polypeptide maturation. It exhibits protease activity with a specificity and catalytic efficiency that is different from protease 3C. Protein 3CD lacks polymerase activity. Protein 3CD binds to the 5'UTR of the viral genome. Its function is as follows. Major viral protease that mediates proteolytic processing of the polyprotein. Cleaves host EIF5B, contributing to host translation shutoff. Also cleaves host PABPC1, contributing to host translation shutoff. Binds and inhibits host IFIH1/MDA5, thereby inhibiting the type-I IFN production and the establishment of the antiviral state. Cleaves host MAP3K7/TAK1, resulting in inhibition of TRAF6-triggered NF-kappa-B induction. Cleaves host NLRP1, triggers host N-glycine-mediated degradation of the autoinhibitory NLRP1 N-terminal fragment. In terms of biological role, replicates the viral genomic RNA on the surface of intracellular membranes. May form linear arrays of subunits that propagate along a strong head-to-tail interaction called interface-I. Covalently attaches UMP to a tyrosine of VPg, which is used to prime RNA synthesis. The positive stranded RNA genome is first replicated at virus induced membranous vesicles, creating a dsRNA genomic replication form. This dsRNA is then used as template to synthesize positive stranded RNA genomes. ss(+)RNA genomes are either translated, replicated or encapsidated. In Homo sapiens (Human), this protein is Genome polyprotein.